Here is a 71-residue protein sequence, read N- to C-terminus: Sec-independent protein translocase protein TatA (71 aa).

Residues 1 to 21 (MGASPVQLLIVLFIAVLVFGG) traverse the membrane as a helical segment.

The protein belongs to the TatA/E family. In terms of assembly, the Tat system comprises two distinct complexes: a TatABC complex, containing multiple copies of TatA, TatB and TatC subunits, and a separate TatA complex, containing only TatA subunits. Substrates initially bind to the TatABC complex, which probably triggers association of the separate TatA complex to form the active translocon.

It is found in the cell inner membrane. In terms of biological role, part of the twin-arginine translocation (Tat) system that transports large folded proteins containing a characteristic twin-arginine motif in their signal peptide across membranes. TatA could form the protein-conducting channel of the Tat system. The chain is Sec-independent protein translocase protein TatA from Dichelobacter nodosus (strain VCS1703A).